The primary structure comprises 227 residues: Ribosomal RNA small subunit methyltransferase G (227 aa).

Residues glycine 81, leucine 86, alanine 131 to glutamate 132, and arginine 149 each bind S-adenosyl-L-methionine.

It belongs to the methyltransferase superfamily. RNA methyltransferase RsmG family.

Its subcellular location is the cytoplasm. Specifically methylates the N7 position of guanine in position 518 of 16S rRNA. In Rhodococcus jostii (strain RHA1), this protein is Ribosomal RNA small subunit methyltransferase G.